A 601-amino-acid polypeptide reads, in one-letter code: ATP-dependent lipid A-core flippase (601 aa).

Transmembrane regions (helical) follow at residues V26 to L46, L82 to L102, V167 to I187, and V263 to V283. One can recognise an ABC transmembrane type-1 domain in the interval A30–R321. The ABC transporter domain occupies I353–M589. G387–S394 contacts ATP.

It belongs to the ABC transporter superfamily. Lipid exporter (TC 3.A.1.106) family. In terms of assembly, homodimer.

The protein localises to the cell inner membrane. The enzyme catalyses ATP + H2O + lipid A-core oligosaccharideSide 1 = ADP + phosphate + lipid A-core oligosaccharideSide 2.. Its function is as follows. Involved in lipopolysaccharide (LPS) biosynthesis. Translocates lipid A-core from the inner to the outer leaflet of the inner membrane. Transmembrane domains (TMD) form a pore in the inner membrane and the ATP-binding domain (NBD) is responsible for energy generation. The chain is ATP-dependent lipid A-core flippase from Aromatoleum aromaticum (strain DSM 19018 / LMG 30748 / EbN1) (Azoarcus sp. (strain EbN1)).